Reading from the N-terminus, the 245-residue chain is tRNA pseudouridine synthase A (245 aa).

Residue Asp52 is the Nucleophile of the active site. Tyr111 lines the substrate pocket.

Belongs to the tRNA pseudouridine synthase TruA family. As to quaternary structure, homodimer.

The catalysed reaction is uridine(38/39/40) in tRNA = pseudouridine(38/39/40) in tRNA. Functionally, formation of pseudouridine at positions 38, 39 and 40 in the anticodon stem and loop of transfer RNAs. The protein is tRNA pseudouridine synthase A of Thermotoga sp. (strain RQ2).